Here is a 340-residue protein sequence, read N- to C-terminus: MHAVSMTIIGAGSYGTALAIVLARNGHHVLLWGYNPQHIRELQEYRCNQAFLPDVQFPDNLCPEDSLETAIKASRNILIAVPSHVFHQVLYNIRPYLDQHSRIIWATKGLEHGTGRLLQEVAREILGDKIPLAVFSGPTFAKELAIGLPTAITIAASDTEFSEELQQLFHFDKSFRVYKNSDMIGVQLGGAVKNVIAIGAGISDGMGFGANARIALITRGLAEISRLGIAMGAELSTFMGMTGLGDLVLTCTDNQSRNRRFGMLLGQGVDIEEAKKQIDQIVEGYLNTKEVHMLAQRIRVEMPITEQIYHVLYCGKSVSEAANALLSRQLKDEMYDTVRF.

Positions 13, 14, and 108 each coordinate NADPH. 3 residues coordinate sn-glycerol 3-phosphate: lysine 108, glycine 137, and threonine 139. Position 141 (alanine 141) interacts with NADPH. Lysine 193, aspartate 246, serine 256, arginine 257, and asparagine 258 together coordinate sn-glycerol 3-phosphate. Catalysis depends on lysine 193, which acts as the Proton acceptor. Arginine 257 is a binding site for NADPH. Positions 281 and 283 each coordinate NADPH.

It belongs to the NAD-dependent glycerol-3-phosphate dehydrogenase family.

It is found in the cytoplasm. It carries out the reaction sn-glycerol 3-phosphate + NAD(+) = dihydroxyacetone phosphate + NADH + H(+). The catalysed reaction is sn-glycerol 3-phosphate + NADP(+) = dihydroxyacetone phosphate + NADPH + H(+). It functions in the pathway membrane lipid metabolism; glycerophospholipid metabolism. In terms of biological role, catalyzes the reduction of the glycolytic intermediate dihydroxyacetone phosphate (DHAP) to sn-glycerol 3-phosphate (G3P), the key precursor for phospholipid synthesis. The polypeptide is Glycerol-3-phosphate dehydrogenase [NAD(P)+] (Bartonella henselae (strain ATCC 49882 / DSM 28221 / CCUG 30454 / Houston 1) (Rochalimaea henselae)).